A 78-amino-acid chain; its full sequence is Acyl carrier protein (78 aa).

A Carrier domain is found at 2–77 (SDIAERVKKI…DAIKFLEKNA (76 aa)). At Ser37 the chain carries O-(pantetheine 4'-phosphoryl)serine.

This sequence belongs to the acyl carrier protein (ACP) family. Post-translationally, 4'-phosphopantetheine is transferred from CoA to a specific serine of apo-ACP by AcpS. This modification is essential for activity because fatty acids are bound in thioester linkage to the sulfhydryl of the prosthetic group.

It localises to the cytoplasm. It participates in lipid metabolism; fatty acid biosynthesis. Functionally, carrier of the growing fatty acid chain in fatty acid biosynthesis. The protein is Acyl carrier protein of Azorhizobium caulinodans (strain ATCC 43989 / DSM 5975 / JCM 20966 / LMG 6465 / NBRC 14845 / NCIMB 13405 / ORS 571).